A 227-amino-acid chain; its full sequence is uncharacterized protein (227 aa).

The next 7 membrane-spanning stretches (helical) occupy residues 25-45 (LLGFSFIPASAGAALAANAGF), 49-69 (AAFGSRWIGFAVVLAFFYGMI), 80-100 (TGVTLLMVFTFGMGVLIGPVL), 111-131 (KIVGIAAAMTAAVFLTMSALA), 144-164 (FLTVGAVILMVAVVANLFLGI), 165-185 (PALALTISAGFVLFSSLMIMW), and 201-221 (AALTLFISLYNIFSSLLNILL).

It is found in the cell membrane. This is an uncharacterized protein from Neisseria meningitidis serogroup B (strain ATCC BAA-335 / MC58).